We begin with the raw amino-acid sequence, 81 residues long: HssA/B-like protein 5 (81 aa).

This sequence belongs to the hssA/B family.

The chain is HssA/B-like protein 5 (hssl5) from Dictyostelium discoideum (Social amoeba).